The sequence spans 481 residues: GTPase Der (481 aa).

2 consecutive EngA-type G domains span residues Pro-3–Phe-166 and Ile-194–Thr-367. Residues Gly-9–Ser-16, Asp-56–Ile-60, Asn-118–Asp-121, Gly-200–Ser-207, Asp-247–Val-251, and Asn-312–Asp-315 contribute to the GTP site. Residues Lys-368–Asn-452 enclose the KH-like domain.

This sequence belongs to the TRAFAC class TrmE-Era-EngA-EngB-Septin-like GTPase superfamily. EngA (Der) GTPase family. As to quaternary structure, associates with the 50S ribosomal subunit.

GTPase that plays an essential role in the late steps of ribosome biogenesis. In Alteromonas mediterranea (strain DSM 17117 / CIP 110805 / LMG 28347 / Deep ecotype), this protein is GTPase Der.